Here is a 217-residue protein sequence, read N- to C-terminus: Large ribosomal subunit protein uL1A (217 aa).

Residue serine 2 is modified to N-acetylserine. An N6-methyllysine; by RKM5 modification is found at lysine 47. Serine 79 and serine 86 each carry phosphoserine.

It belongs to the universal ribosomal protein uL1 family. In terms of assembly, component of the large ribosomal subunit (LSU). Mature yeast ribosomes consist of a small (40S) and a large (60S) subunit. The 40S small subunit contains 1 molecule of ribosomal RNA (18S rRNA) and 33 different proteins (encoded by 57 genes). The large 60S subunit contains 3 rRNA molecules (25S, 5.8S and 5S rRNA) and 46 different proteins (encoded by 81 genes). uL1 forms part of the L1 stalk. N-terminally acetylated by acetyltransferase NatA.

Its subcellular location is the cytoplasm. Functionally, component of the ribosome, a large ribonucleoprotein complex responsible for the synthesis of proteins in the cell. The small ribosomal subunit (SSU) binds messenger RNAs (mRNAs) and translates the encoded message by selecting cognate aminoacyl-transfer RNA (tRNA) molecules. The large subunit (LSU) contains the ribosomal catalytic site termed the peptidyl transferase center (PTC), which catalyzes the formation of peptide bonds, thereby polymerizing the amino acids delivered by tRNAs into a polypeptide chain. The nascent polypeptides leave the ribosome through a tunnel in the LSU and interact with protein factors that function in enzymatic processing, targeting, and the membrane insertion of nascent chains at the exit of the ribosomal tunnel. uL1 forms part of the L1 stalk, a mobile element that plays a role in evacuating the exit-site tRNA. The sequence is that of Large ribosomal subunit protein uL1A from Saccharomyces cerevisiae (strain ATCC 204508 / S288c) (Baker's yeast).